The chain runs to 649 residues: Protein WHI4 (649 aa).

A phosphoserine mark is found at S22 and S206. Disordered stretches follow at residues 196–217 (EHVS…SSAQ) and 228–247 (ISYG…KPRP). Residues 228 to 238 (ISYGKTSSSPL) are compositionally biased toward polar residues. Phosphoserine is present on residues S258 and S283. Disordered regions lie at residues 438-461 (LDLN…SIFN) and 604-649 (QLPH…YGKS). Residues 533–625 (NTLYVGNLPP…GGIRLSFSKN (93 aa)) form the RRM domain. The segment covering 631 to 649 (GSNSRSKSGYSFNGSYGKS) has biased composition (polar residues).

Post-translationally, phosphorylated by PKA in vitro.

Its subcellular location is the cytoplasm. Has a partially redundant function to WHI3, a dosage-dependent modulator of cell size. This chain is Protein WHI4 (WHI4), found in Saccharomyces cerevisiae (strain ATCC 204508 / S288c) (Baker's yeast).